The following is a 435-amino-acid chain: tRNA modification GTPase MnmE (435 aa).

Residues arginine 20, glutamate 77, and lysine 117 each contribute to the (6S)-5-formyl-5,6,7,8-tetrahydrofolate site. In terms of domain architecture, TrmE-type G spans 214–359 (GLKIVIAGAP…FIKKLESFCH (146 aa)). Residues 224–229 (NSGKSS), 243–249 (TEEAGTT), and 268–271 (DTAG) each bind GTP. Residues serine 228 and threonine 249 each contribute to the Mg(2+) site. (6S)-5-formyl-5,6,7,8-tetrahydrofolate is bound at residue lysine 435.

Belongs to the TRAFAC class TrmE-Era-EngA-EngB-Septin-like GTPase superfamily. TrmE GTPase family. Homodimer. Heterotetramer of two MnmE and two MnmG subunits. It depends on K(+) as a cofactor.

It localises to the cytoplasm. In terms of biological role, exhibits a very high intrinsic GTPase hydrolysis rate. Involved in the addition of a carboxymethylaminomethyl (cmnm) group at the wobble position (U34) of certain tRNAs, forming tRNA-cmnm(5)s(2)U34. The chain is tRNA modification GTPase MnmE from Bartonella tribocorum (strain CIP 105476 / IBS 506).